The primary structure comprises 422 residues: Glutamate-1-semialdehyde 2,1-aminomutase (422 aa).

Residue K258 is modified to N6-(pyridoxal phosphate)lysine.

It belongs to the class-III pyridoxal-phosphate-dependent aminotransferase family. HemL subfamily. As to quaternary structure, homodimer. The cofactor is pyridoxal 5'-phosphate.

The protein localises to the cytoplasm. It carries out the reaction (S)-4-amino-5-oxopentanoate = 5-aminolevulinate. It functions in the pathway porphyrin-containing compound metabolism; protoporphyrin-IX biosynthesis; 5-aminolevulinate from L-glutamyl-tRNA(Glu): step 2/2. The protein is Glutamate-1-semialdehyde 2,1-aminomutase of Chlamydia muridarum (strain MoPn / Nigg).